The chain runs to 346 residues: tRNA N6-adenosine threonylcarbamoyltransferase (346 aa).

His110 and His114 together coordinate Fe cation. Substrate is bound by residues 132-136 (LLSGG), Asp165, Gly178, and Asn274. Asp298 is a Fe cation binding site.

The protein belongs to the KAE1 / TsaD family. The cofactor is Fe(2+).

The protein resides in the cytoplasm. The catalysed reaction is L-threonylcarbamoyladenylate + adenosine(37) in tRNA = N(6)-L-threonylcarbamoyladenosine(37) in tRNA + AMP + H(+). Functionally, required for the formation of a threonylcarbamoyl group on adenosine at position 37 (t(6)A37) in tRNAs that read codons beginning with adenine. Is involved in the transfer of the threonylcarbamoyl moiety of threonylcarbamoyl-AMP (TC-AMP) to the N6 group of A37, together with TsaE and TsaB. TsaD likely plays a direct catalytic role in this reaction. The polypeptide is tRNA N6-adenosine threonylcarbamoyltransferase (Borreliella burgdorferi (strain ZS7) (Borrelia burgdorferi)).